A 313-amino-acid polypeptide reads, in one-letter code: Protein FixB (313 aa).

255-283 (LYLAVGISGQIQHMVGANASQTIFAINKD) provides a ligand contact to FAD.

This sequence belongs to the ETF alpha-subunit/FixB family. In terms of assembly, heterodimer of FixA and FixB.

It functions in the pathway amine and polyamine metabolism; carnitine metabolism. Required for anaerobic carnitine reduction. May bring reductant to CaiA. The sequence is that of Protein FixB from Escherichia coli (strain 55989 / EAEC).